The sequence spans 236 residues: Orotidine 5'-phosphate decarboxylase (236 aa).

Substrate contacts are provided by residues aspartate 14, lysine 36, 63–72 (DLKYHDIPNT), threonine 122, arginine 183, glutamine 192, glycine 212, and arginine 213. Lysine 65 functions as the Proton donor in the catalytic mechanism.

This sequence belongs to the OMP decarboxylase family. Type 1 subfamily. In terms of assembly, homodimer.

The catalysed reaction is orotidine 5'-phosphate + H(+) = UMP + CO2. Its pathway is pyrimidine metabolism; UMP biosynthesis via de novo pathway; UMP from orotate: step 2/2. Its function is as follows. Catalyzes the decarboxylation of orotidine 5'-monophosphate (OMP) to uridine 5'-monophosphate (UMP). This Halorhodospira halophila (strain DSM 244 / SL1) (Ectothiorhodospira halophila (strain DSM 244 / SL1)) protein is Orotidine 5'-phosphate decarboxylase.